A 1092-amino-acid chain; its full sequence is SUMO-specific isopeptidase USPL1 (1092 aa).

Disordered stretches follow at residues V145–S168 and T185–T207. Composition is skewed to polar residues over residues E148–I163 and G197–C206. A USP domain is found at V227–K500. Residue C236 is the Nucleophile of the active site. The interval C236 to V495 is SUMO-binding. H456 serves as the catalytic Proton acceptor. Disordered stretches follow at residues L713–E749, G797–C859, and A904–N930. The segment covering A732 to K748 has biased composition (polar residues). Basic residues predominate over residues H810 to A819. Residues K821–P832 show a composition bias toward pro residues. At S909 the chain carries Phosphoserine.

This sequence belongs to the peptidase C19 family. In terms of assembly, interacts with ELL.

The protein localises to the nucleus. Its subcellular location is the cajal body. Its function is as follows. SUMO-specific isopeptidase involved in protein desumoylation. Specifically binds SUMO proteins with a higher affinity for SUMO2 and SUMO3 which it cleaves more efficiently. Also able to process full-length SUMO proteins to their mature forms. Plays a key role in RNA polymerase-II-mediated snRNA transcription in the Cajal bodies. Is a component of complexes that can bind to U snRNA genes. This is SUMO-specific isopeptidase USPL1 (USPL1) from Homo sapiens (Human).